A 240-amino-acid polypeptide reads, in one-letter code: Lipoprotein-releasing system ATP-binding protein LolD (240 aa).

The ABC transporter domain occupies 15 to 240 (IRAERLGKTY…GLRELTSAEV (226 aa)). 51-58 (GASGAGKS) contacts ATP.

Belongs to the ABC transporter superfamily. Lipoprotein translocase (TC 3.A.1.125) family. The complex is composed of two ATP-binding proteins (LolD) and two transmembrane proteins (LolC and LolE).

The protein resides in the cell inner membrane. In terms of biological role, part of the ABC transporter complex LolCDE involved in the translocation of mature outer membrane-directed lipoproteins, from the inner membrane to the periplasmic chaperone, LolA. Responsible for the formation of the LolA-lipoprotein complex in an ATP-dependent manner. This Xylella fastidiosa (strain 9a5c) protein is Lipoprotein-releasing system ATP-binding protein LolD.